A 211-amino-acid chain; its full sequence is Thiamine-phosphate synthase (211 aa).

4-amino-2-methyl-5-(diphosphooxymethyl)pyrimidine is bound by residues 37–41 (QLRIK) and Asn69. 2 residues coordinate Mg(2+): Asp70 and Asp89. Residue Ser108 coordinates 4-amino-2-methyl-5-(diphosphooxymethyl)pyrimidine. 134–136 (TQT) provides a ligand contact to 2-[(2R,5Z)-2-carboxy-4-methylthiazol-5(2H)-ylidene]ethyl phosphate. Lys137 provides a ligand contact to 4-amino-2-methyl-5-(diphosphooxymethyl)pyrimidine. 2-[(2R,5Z)-2-carboxy-4-methylthiazol-5(2H)-ylidene]ethyl phosphate is bound by residues Gly166 and 186–187 (VS).

This sequence belongs to the thiamine-phosphate synthase family. Mg(2+) is required as a cofactor.

It carries out the reaction 2-[(2R,5Z)-2-carboxy-4-methylthiazol-5(2H)-ylidene]ethyl phosphate + 4-amino-2-methyl-5-(diphosphooxymethyl)pyrimidine + 2 H(+) = thiamine phosphate + CO2 + diphosphate. The catalysed reaction is 2-(2-carboxy-4-methylthiazol-5-yl)ethyl phosphate + 4-amino-2-methyl-5-(diphosphooxymethyl)pyrimidine + 2 H(+) = thiamine phosphate + CO2 + diphosphate. The enzyme catalyses 4-methyl-5-(2-phosphooxyethyl)-thiazole + 4-amino-2-methyl-5-(diphosphooxymethyl)pyrimidine + H(+) = thiamine phosphate + diphosphate. The protein operates within cofactor biosynthesis; thiamine diphosphate biosynthesis; thiamine phosphate from 4-amino-2-methyl-5-diphosphomethylpyrimidine and 4-methyl-5-(2-phosphoethyl)-thiazole: step 1/1. Condenses 4-methyl-5-(beta-hydroxyethyl)thiazole monophosphate (THZ-P) and 2-methyl-4-amino-5-hydroxymethyl pyrimidine pyrophosphate (HMP-PP) to form thiamine monophosphate (TMP). This Salmonella newport (strain SL254) protein is Thiamine-phosphate synthase.